The following is a 443-amino-acid chain: MSSKLYIKTFGCQMNEYDSAKMADILLSEKNMELTEVPEEADLILFNTCSVREKAQEKVFHDLGRVRHLKNSKPDLLIGVGGCVASQEGSEIVRRAPFVDLVFGPQTLHRLPELIDARRRTGQSQVDITFPEIEKFDRLPPARTTGATAFVSIMEGCSKYCSFCVVPYTRGEEVSRPLDDVLTEVAGLVIQGVKEVTLLGQNVNAYYDKTSGEGDIDFATLLDYIHEIPGLVRIRYTTSHPREFTARLIETYQRLPKLVGHVHLPIQSGSDRILAAMKRGYTIIEYKSIIRKLRTIRPNISISSDFIVGFPGETDTDFEETMKLIDDVKFDESFSFIYSPRPGTPASDLPDDTPYRIKLARLHQLQEKIQRNAQMISQSMVDTIQRVLVEGPSKKDPNEFCGRTDNNRVVNFAGHAGLVGSFVDIKITAVSSHTLRGEISDMQ.

The MTTase N-terminal domain maps to 3–120; that stretch reads SKLYIKTFGC…LPELIDARRR (118 aa). C12, C49, C83, C157, C161, and C164 together coordinate [4Fe-4S] cluster. One can recognise a Radical SAM core domain in the interval 143-377; sequence RTTGATAFVS…KIQRNAQMIS (235 aa). In terms of domain architecture, TRAM spans 378–441; sequence QSMVDTIQRV…SHTLRGEISD (64 aa).

It belongs to the methylthiotransferase family. MiaB subfamily. As to quaternary structure, monomer. It depends on [4Fe-4S] cluster as a cofactor.

The protein localises to the cytoplasm. It catalyses the reaction N(6)-dimethylallyladenosine(37) in tRNA + (sulfur carrier)-SH + AH2 + 2 S-adenosyl-L-methionine = 2-methylsulfanyl-N(6)-dimethylallyladenosine(37) in tRNA + (sulfur carrier)-H + 5'-deoxyadenosine + L-methionine + A + S-adenosyl-L-homocysteine + 2 H(+). In terms of biological role, catalyzes the methylthiolation of N6-(dimethylallyl)adenosine (i(6)A), leading to the formation of 2-methylthio-N6-(dimethylallyl)adenosine (ms(2)i(6)A) at position 37 in tRNAs that read codons beginning with uridine. In Nitrosomonas eutropha (strain DSM 101675 / C91 / Nm57), this protein is tRNA-2-methylthio-N(6)-dimethylallyladenosine synthase.